The sequence spans 425 residues: Serine--tRNA ligase (425 aa).

Thr231 to Glu233 is an L-serine binding site. ATP contacts are provided by residues Arg262–Glu264 and Val278. L-serine is bound at residue Glu285. Glu349 to Ser352 contacts ATP. Thr384 serves as a coordination point for L-serine.

Belongs to the class-II aminoacyl-tRNA synthetase family. Type-1 seryl-tRNA synthetase subfamily. As to quaternary structure, homodimer. The tRNA molecule binds across the dimer.

The protein resides in the cytoplasm. The enzyme catalyses tRNA(Ser) + L-serine + ATP = L-seryl-tRNA(Ser) + AMP + diphosphate + H(+). The catalysed reaction is tRNA(Sec) + L-serine + ATP = L-seryl-tRNA(Sec) + AMP + diphosphate + H(+). It participates in aminoacyl-tRNA biosynthesis; selenocysteinyl-tRNA(Sec) biosynthesis; L-seryl-tRNA(Sec) from L-serine and tRNA(Sec): step 1/1. Catalyzes the attachment of serine to tRNA(Ser). Is also able to aminoacylate tRNA(Sec) with serine, to form the misacylated tRNA L-seryl-tRNA(Sec), which will be further converted into selenocysteinyl-tRNA(Sec). This Dictyoglomus turgidum (strain DSM 6724 / Z-1310) protein is Serine--tRNA ligase.